The sequence spans 124 residues: Small ribosomal subunit protein uS12 (124 aa).

2 disordered regions span residues 9–32 (RKGR…QRRG) and 105–124 (QGVK…KEKS). Residues 108-118 (KNRKQARSRYG) are compositionally biased toward basic residues.

It belongs to the universal ribosomal protein uS12 family. As to quaternary structure, part of the 30S ribosomal subunit. Contacts proteins S8 and S17. May interact with IF1 in the 30S initiation complex.

Its function is as follows. With S4 and S5 plays an important role in translational accuracy. Functionally, interacts with and stabilizes bases of the 16S rRNA that are involved in tRNA selection in the A site and with the mRNA backbone. Located at the interface of the 30S and 50S subunits, it traverses the body of the 30S subunit contacting proteins on the other side and probably holding the rRNA structure together. The combined cluster of proteins S8, S12 and S17 appears to hold together the shoulder and platform of the 30S subunit. The chain is Small ribosomal subunit protein uS12 from Nocardia farcinica (strain IFM 10152).